Consider the following 393-residue polypeptide: 8-amino-7-oxononanoate synthase (393 aa).

108–109 lines the pyridoxal 5'-phosphate pocket; sequence GF. Substrate is bound at residue His-133. Pyridoxal 5'-phosphate contacts are provided by residues Ser-182, 207–210, and 238–241; these read DDAH and TLSK. Lys-241 bears the N6-(pyridoxal phosphate)lysine mark. Substrate is bound at residue Thr-355.

It belongs to the class-II pyridoxal-phosphate-dependent aminotransferase family. BioF subfamily. In terms of assembly, homodimer. Requires pyridoxal 5'-phosphate as cofactor.

It catalyses the reaction 6-carboxyhexanoyl-[ACP] + L-alanine + H(+) = (8S)-8-amino-7-oxononanoate + holo-[ACP] + CO2. It functions in the pathway cofactor biosynthesis; biotin biosynthesis. Catalyzes the decarboxylative condensation of pimeloyl-[acyl-carrier protein] and L-alanine to produce 8-amino-7-oxononanoate (AON), [acyl-carrier protein], and carbon dioxide. The sequence is that of 8-amino-7-oxononanoate synthase from Petrotoga mobilis (strain DSM 10674 / SJ95).